The sequence spans 636 residues: MEDLTPTNTSLDTTTTNNDTTSDREAAPTTLNLTPTASESENSLSPVTAEDLIAKSIKEGCPKRTSNDFMFLQSMGEGAYSQVFRCREVATDAMFAVKVLQKSYLNRHQKMDAIIREKNILTYLSQECGGHPFVTQLYTHFHDQARIYFVIGLVENGDLGESLCHFGSFDMLTSKFFASEILTGLQFLHDNKIVHRDMKPDNVLIQKDGHILITDFGSAQAFGGLQLSQEGFTDANQASSRSSDSGSPPPTRFYSDEEVPEENTARRTTFVGTALYVSPEMLADGDVGPQTDIWGLGCILFQCLAGQPPFRAVNQYHLLKRIQELDFSFPEGFPEEASEIIAKILVRDPSTRITSQELMAHKFFENVDWVNIANIKPPVLHAYIPATFGEPEYYSNIGPVEPGLDDRALFRLMNLGNDASASQPSTFRPSNVEHRGDPFVSEIAPRANSEAEKNRAARAQKLEEQRVKNPFHIFTNNSLILKQGYLEKKRGLFARRRMFLLTEGPHLLYIDVPNLVLKGEVPWTPCMQVELKNSGTFFIHTPNRVYYLFDLEKKADEWCKAINDVRKRYSVTIEKTFNSAMRDGTFGSIYGKKKSRKEMMREQKALRRKQEKEEKKALKAEQVSKKLSMQMDKKSP.

2 stretches are compositionally biased toward low complexity: residues 1-20 (MEDLTPTNTSLDTTTTNNDT) and 27-37 (APTTLNLTPTA). The segment at 1-45 (MEDLTPTNTSLDTTTTNNDTTSDREAAPTTLNLTPTASESENSLS) is disordered. One can recognise a Protein kinase domain in the interval 69–364 (FMFLQSMGEG…SQELMAHKFF (296 aa)). ATP contacts are provided by residues 79–81 (AYS) and Lys-98. The PIF-pocket stretch occupies residues 100-149 (LQKSYLNRHQKMDAIIREKNILTYLSQECGGHPFVTQLYTHFHDQARIYF). Residues 152–154 (GLV) and Asp-158 each bind ATP. Asp-197 serves as the catalytic Proton acceptor. ATP contacts are provided by Asp-201 and Asp-215. Disordered stretches follow at residues 233-264 (TDANQASSRSSDSGSPPPTRFYSDEEVPEENT) and 593-636 (KKSR…KKSP). Positions 550-631 (DLEKKADEWC…QVSKKLSMQM (82 aa)) form a coiled coil. The segment covering 597–624 (KEMMREQKALRRKQEKEEKKALKAEQVS) has biased composition (basic and acidic residues).

It belongs to the protein kinase superfamily. AGC Ser/Thr protein kinase family. PDPK1 subfamily. As to quaternary structure, interacts directly with sgk-1, akt-1 and akt-2.

The protein resides in the cytoplasm. It carries out the reaction L-seryl-[protein] + ATP = O-phospho-L-seryl-[protein] + ADP + H(+). The catalysed reaction is L-threonyl-[protein] + ATP = O-phospho-L-threonyl-[protein] + ADP + H(+). Functionally, involved in the daf-2/insulin receptor-like transduction pathway, which controls longevity and prevents developmental arrest at the dauer stage. Phosphorylates and activates sgk-1, akt-1 and akt-2. The sequence is that of 3-phosphoinositide-dependent protein kinase 1 from Caenorhabditis elegans.